The chain runs to 411 residues: LL-diaminopimelate aminotransferase (411 aa).

Residues Tyr15 and Gly42 each contribute to the substrate site. Pyridoxal 5'-phosphate-binding positions include Tyr72, 108–109 (SK), Tyr132, Asn187, Tyr218, and 246–248 (SFS). Substrate is bound by residues Lys109, Tyr132, and Asn187. At Lys249 the chain carries N6-(pyridoxal phosphate)lysine. Arg257 and Asn292 together coordinate pyridoxal 5'-phosphate. Substrate is bound by residues Asn292 and Arg388.

The protein belongs to the class-I pyridoxal-phosphate-dependent aminotransferase family. LL-diaminopimelate aminotransferase subfamily. As to quaternary structure, homodimer. Pyridoxal 5'-phosphate is required as a cofactor.

The enzyme catalyses (2S,6S)-2,6-diaminopimelate + 2-oxoglutarate = (S)-2,3,4,5-tetrahydrodipicolinate + L-glutamate + H2O + H(+). It participates in amino-acid biosynthesis; L-lysine biosynthesis via DAP pathway; LL-2,6-diaminopimelate from (S)-tetrahydrodipicolinate (aminotransferase route): step 1/1. In terms of biological role, involved in the synthesis of meso-diaminopimelate (m-DAP or DL-DAP), required for both lysine and peptidoglycan biosynthesis. Catalyzes the direct conversion of tetrahydrodipicolinate to LL-diaminopimelate. The polypeptide is LL-diaminopimelate aminotransferase (Citrifermentans bemidjiense (strain ATCC BAA-1014 / DSM 16622 / JCM 12645 / Bem) (Geobacter bemidjiensis)).